We begin with the raw amino-acid sequence, 281 residues long: Very-long-chain (3R)-3-hydroxyacyl-CoA dehydratase 1 (281 aa).

Residues 1–68 are Cytoplasmic-facing; sequence MGKGDWRQGR…RRLGLLATAW (68 aa). Residues 69 to 88 form a helical membrane-spanning segment; sequence LTFYNIAMTAGWLVLAIAMV. Residues 89 to 107 are Lumenal-facing; it reads RFYMEKGTHRGLYKSIQKT. A helical transmembrane segment spans residues 108-124; it reads LKFFQTFALLEVVHCLI. Residues 125–134 lie on the Cytoplasmic side of the membrane; it reads GIVPTSVLVT. A helical transmembrane segment spans residues 135–152; that stretch reads GVQVSSRIFMVWLITHSI. Residues 153-158 are Lumenal-facing; that stretch reads KPIQNE. Residues 159 to 173 form a helical membrane-spanning segment; sequence ESVVLFLVSWTVTEI. At 174–196 the chain is on the cytoplasmic side; that stretch reads TRYSFYTFSLLDHLPHFIKWARY. A helical membrane pass occupies residues 197-214; sequence NLFIILYPVGVAGELLTI. Residues tyrosine 203 and glutamate 210 contribute to the active site. Residues 215–244 are Lumenal-facing; it reads YAALPYVKKSGMFSVRLPNKYNVSFDYYYF. N-linked (GlcNAc...) asparagine glycosylation occurs at asparagine 236. The chain crosses the membrane as a helical span at residues 245 to 262; it reads LLITMASYIPLFPQLYFH. The Cytoplasmic portion of the chain corresponds to 263 to 281; it reads MLRQRRKVLHGEVIAEKDD.

It belongs to the very long-chain fatty acids dehydratase HACD family. May interact with enzymes of the ELO family (including ELOVL1); with those enzymes that mediate condensation, the first of the four steps of the reaction cycle responsible for fatty acids elongation, may be part of a larger fatty acids elongase complex. Interacts with TECR. Post-translationally, N-glycosylated. In terms of tissue distribution, expressed at high levels in heart, skeletal muscle and testis, weak expression in kidney and liver.

The protein localises to the endoplasmic reticulum membrane. The enzyme catalyses a very-long-chain (3R)-3-hydroxyacyl-CoA = a very-long-chain (2E)-enoyl-CoA + H2O. It carries out the reaction (3R)-hydroxyhexadecanoyl-CoA = (2E)-hexadecenoyl-CoA + H2O. It catalyses the reaction (3R)-hydroxyoctadecanoyl-CoA = (2E)-octadecenoyl-CoA + H2O. The catalysed reaction is (3R)-hydroxyeicosanoyl-CoA = (2E)-eicosenoyl-CoA + H2O. The enzyme catalyses (3R)-hydroxydocosanoyl-CoA = (2E)-docosenoyl-CoA + H2O. It carries out the reaction (3R)-hydroxytetracosanoyl-CoA = (2E)-tetracosenoyl-CoA + H2O. It catalyses the reaction (3R)-hydroxyhexacosanoyl-CoA = (2E)-hexacosenoyl-CoA + H2O. It participates in lipid metabolism; fatty acid biosynthesis. This Mus musculus (Mouse) protein is Very-long-chain (3R)-3-hydroxyacyl-CoA dehydratase 1.